We begin with the raw amino-acid sequence, 433 residues long: Histidinol dehydrogenase (433 aa).

NAD(+)-binding residues include Y133, Q194, and N217. Substrate contacts are provided by S240, Q262, and H265. Positions 262 and 265 each coordinate Zn(2+). Active-site proton acceptor residues include E330 and H331. H331, D364, E418, and H423 together coordinate substrate. D364 lines the Zn(2+) pocket. Zn(2+) is bound at residue H423.

It belongs to the histidinol dehydrogenase family. It depends on Zn(2+) as a cofactor.

The catalysed reaction is L-histidinol + 2 NAD(+) + H2O = L-histidine + 2 NADH + 3 H(+). The protein operates within amino-acid biosynthesis; L-histidine biosynthesis; L-histidine from 5-phospho-alpha-D-ribose 1-diphosphate: step 9/9. Its function is as follows. Catalyzes the sequential NAD-dependent oxidations of L-histidinol to L-histidinaldehyde and then to L-histidine. The chain is Histidinol dehydrogenase from Dechloromonas aromatica (strain RCB).